A 318-amino-acid polypeptide reads, in one-letter code: tRNA pseudouridine synthase B (318 aa).

Aspartate 47 serves as the catalytic Nucleophile.

The protein belongs to the pseudouridine synthase TruB family. Type 1 subfamily.

It catalyses the reaction uridine(55) in tRNA = pseudouridine(55) in tRNA. In terms of biological role, responsible for synthesis of pseudouridine from uracil-55 in the psi GC loop of transfer RNAs. The polypeptide is tRNA pseudouridine synthase B (Colwellia psychrerythraea (strain 34H / ATCC BAA-681) (Vibrio psychroerythus)).